Reading from the N-terminus, the 426-residue chain is Serine--tRNA ligase (426 aa).

An L-serine-binding site is contributed by 235-237 (TAE). 266–268 (RRE) is an ATP binding site. Glutamate 289 is a binding site for L-serine. 353–356 (EISS) contacts ATP. Serine 389 serves as a coordination point for L-serine.

Belongs to the class-II aminoacyl-tRNA synthetase family. Type-1 seryl-tRNA synthetase subfamily. Homodimer. The tRNA molecule binds across the dimer.

The protein localises to the cytoplasm. The catalysed reaction is tRNA(Ser) + L-serine + ATP = L-seryl-tRNA(Ser) + AMP + diphosphate + H(+). It catalyses the reaction tRNA(Sec) + L-serine + ATP = L-seryl-tRNA(Sec) + AMP + diphosphate + H(+). The protein operates within aminoacyl-tRNA biosynthesis; selenocysteinyl-tRNA(Sec) biosynthesis; L-seryl-tRNA(Sec) from L-serine and tRNA(Sec): step 1/1. Its function is as follows. Catalyzes the attachment of serine to tRNA(Ser). Is also able to aminoacylate tRNA(Sec) with serine, to form the misacylated tRNA L-seryl-tRNA(Sec), which will be further converted into selenocysteinyl-tRNA(Sec). The chain is Serine--tRNA ligase from Trichormus variabilis (strain ATCC 29413 / PCC 7937) (Anabaena variabilis).